Reading from the N-terminus, the 402-residue chain is MNSNNKRVALQEISNYVSKSLNVKGWVNAQVREISLQNGCSPSDKHFPSQSWHGISSIEESQIQKDYDSFLASPLEEEIVFTEKQLLVDLDVCSISNVQSPNCSVSEFGIAIEESNDNCAEEDEEEELQMRYSADESVSVEYAKEILSHMEKLEIRFMPDYRHMSAQPYYVTEMRASVINWIVGVHTCINLLPESLFLSINVLDRFLSLQNVPASKMKLCGATALFIACKYEEIHPPTVKDLEIVLEGEWIGEDICGMEKYMLMVLQYQLGWPGPVSFLRLLTIVNKWESQLRIMIKYFLEVSLVEQRFSSLRASQLVATCAYTGQSILQEENWSNTLPQITGYDYMSLVSYVHLLLKCLENPFDHHYAIYSKYATPYFHGISRQVHDWIATNTNLMAMDGS.

Belongs to the cyclin family. Cyclin AB subfamily.

Required for pre-meiotic DNA synthesis and S phase progression. Regulates levels of meiotic intragenic recombination. The sequence is that of Meiosis-specific cyclin rem1 (rem1) from Schizosaccharomyces pombe (strain 972 / ATCC 24843) (Fission yeast).